Here is a 138-residue protein sequence, read N- to C-terminus: Cysteine desulfuration protein SufE (138 aa).

The active-site Cysteine persulfide intermediate is the Cys-51.

It belongs to the SufE family. Homodimer. Interacts with SufS.

It localises to the cytoplasm. Its pathway is cofactor biosynthesis; iron-sulfur cluster biosynthesis. Participates in cysteine desulfuration mediated by SufS. Cysteine desulfuration mobilizes sulfur from L-cysteine to yield L-alanine and constitutes an essential step in sulfur metabolism for biosynthesis of a variety of sulfur-containing biomolecules. Functions as a sulfur acceptor for SufS, by mediating the direct transfer of the sulfur atom from the S-sulfanylcysteine of SufS, an intermediate product of cysteine desulfuration process. In Escherichia coli O45:K1 (strain S88 / ExPEC), this protein is Cysteine desulfuration protein SufE.